A 623-amino-acid polypeptide reads, in one-letter code: Protein Atg16l2 (623 aa).

Basic and acidic residues predominate over residues 64-79; it reads PKDAISTRHEDWREEV. The interval 64–93 is disordered; that stretch reads PKDAISTRHEDWREEVSGTGPDQVSSPASL. Residues 116-229 are a coiled coil; that stretch reads VKKSAALDTL…ANQALVSQEL (114 aa). 7 WD repeats span residues 338–377, 382–421, 424–458, 459–502, 504–543, 550–589, and 593–623; these read AHLSEVNAVCFGPNSSLLATGGADRLIHLWNVVGGRLEAN, GAGGSITSVDFDPSGSQVLAATYNQAAQLWKVGETQSKET, GHKDKVTAAKFKLTRHQAVTGSRDRTVKEWDLGRA, YCSR…CIQV, PVQGRVTSLHLSYDQLHLLSCSRDNTLKVIDLRISNIRQV, KCSSDWTKAVFSPDRSYALAGSSNGDLYIWDVNTGKLETS, and PHCTAVNAVAWCFSGNHVVSVDQGRKVVLWH.

It belongs to the WD repeat ATG16 family. Homooligomer. Heterooligomer with ATG16L2. Interacts with ATG5. Self-oligomerizes to form a 800-kDa complex composed of ATG12-ATG5 and ATG16L2. Interacts with RAB33B. In terms of tissue distribution, widely expressed.

The protein localises to the cytoplasm. It is found in the cytosol. May play a role in regulating epithelial homeostasis in an ATG16L1-dependent manner. In Mus musculus (Mouse), this protein is Protein Atg16l2 (Atg16l2).